The sequence spans 364 residues: Probable UDP-arabinopyranose mutase 4 (364 aa).

The short motif at 106–108 (DDD) is the DXD motif element. Residue R154 is glycosylated (N-linked (Glc...) arginine).

This sequence belongs to the RGP family. As to quaternary structure, heteromers with RGP1 and RGP2. Mn(2+) serves as cofactor. The cofactor is Mg(2+). Reversibly glycosylated in vitro by UDP-glucose, UDP-xylose and UDP-galactose, but not UDP-mannose. As to expression, specifically expressed in developing seeds.

It localises to the cytoplasm. The protein localises to the cytosol. The protein resides in the golgi apparatus. The enzyme catalyses UDP-beta-L-arabinofuranose = UDP-beta-L-arabinopyranose. In terms of biological role, probable UDP-L-arabinose mutase involved in the biosynthesis of cell wall non-cellulosic polysaccharides. In Arabidopsis thaliana (Mouse-ear cress), this protein is Probable UDP-arabinopyranose mutase 4.